The primary structure comprises 303 residues: D-alanine--D-alanine ligase (303 aa).

The region spanning 102–298 (RILLAAAGLP…YPELCDWMVR (197 aa)) is the ATP-grasp domain. An ATP-binding site is contributed by 128 to 181 (PLPAPYVIKPVAEGSSVGVEIVRTGDNRRAEIARTWRFGKEALVESFIPGRELT). Residues aspartate 251, glutamate 265, and asparagine 267 each coordinate Mg(2+).

It belongs to the D-alanine--D-alanine ligase family. Mg(2+) is required as a cofactor. Requires Mn(2+) as cofactor.

It is found in the cytoplasm. It catalyses the reaction 2 D-alanine + ATP = D-alanyl-D-alanine + ADP + phosphate + H(+). Its pathway is cell wall biogenesis; peptidoglycan biosynthesis. Functionally, cell wall formation. The chain is D-alanine--D-alanine ligase from Gluconobacter oxydans (strain 621H) (Gluconobacter suboxydans).